Reading from the N-terminus, the 217-residue chain is MTPKRHPAGPRRLVPRMARGSAPWLLPAFTAAGLAVLTSRGSRTRKALAVPVVALAAGMAWFFRDPDRGPASGRFLSAADGVVQSVDPLPDGRTRIAVFMNPLNVHVNRAPIAGVVTGVEHRPGGFLPAFDKDSERNERVIWTFDTEVGEVTVIQIAGAMVRRIVPYHPVGAKVEQGERIGLIRFGSRVDVYLPPGIAPAVEVGQKVRAGETRLDRD.

S187 functions as the Schiff-base intermediate with substrate; via pyruvic acid in the catalytic mechanism. Residue S187 is modified to Pyruvic acid (Ser); by autocatalysis.

Belongs to the phosphatidylserine decarboxylase family. PSD-A subfamily. In terms of assembly, heterodimer of a large membrane-associated beta subunit and a small pyruvoyl-containing alpha subunit. It depends on pyruvate as a cofactor. In terms of processing, is synthesized initially as an inactive proenzyme. Formation of the active enzyme involves a self-maturation process in which the active site pyruvoyl group is generated from an internal serine residue via an autocatalytic post-translational modification. Two non-identical subunits are generated from the proenzyme in this reaction, and the pyruvate is formed at the N-terminus of the alpha chain, which is derived from the carboxyl end of the proenzyme. The post-translation cleavage follows an unusual pathway, termed non-hydrolytic serinolysis, in which the side chain hydroxyl group of the serine supplies its oxygen atom to form the C-terminus of the beta chain, while the remainder of the serine residue undergoes an oxidative deamination to produce ammonia and the pyruvoyl prosthetic group on the alpha chain.

The protein localises to the cell membrane. The catalysed reaction is a 1,2-diacyl-sn-glycero-3-phospho-L-serine + H(+) = a 1,2-diacyl-sn-glycero-3-phosphoethanolamine + CO2. It functions in the pathway phospholipid metabolism; phosphatidylethanolamine biosynthesis; phosphatidylethanolamine from CDP-diacylglycerol: step 2/2. In terms of biological role, catalyzes the formation of phosphatidylethanolamine (PtdEtn) from phosphatidylserine (PtdSer). This is Phosphatidylserine decarboxylase proenzyme from Thermobifida fusca (strain YX).